Consider the following 321-residue polypeptide: Fibronectin type III domain-containing protein 8 (321 aa).

In terms of domain architecture, Fibronectin type-III spans 175-277; the sequence is VPEAPFVCEH…KPYKFATVAT (103 aa).

The sequence is that of Fibronectin type III domain-containing protein 8 (FNDC8) from Bos taurus (Bovine).